We begin with the raw amino-acid sequence, 261 residues long: Thiazole synthase (261 aa).

Residue Lys102 is the Schiff-base intermediate with DXP of the active site. Residues Gly163, 189 to 190, and 211 to 212 each bind 1-deoxy-D-xylulose 5-phosphate; these read AG and NT.

Belongs to the ThiG family. Homotetramer. Forms heterodimers with either ThiH or ThiS.

Its subcellular location is the cytoplasm. The catalysed reaction is [ThiS sulfur-carrier protein]-C-terminal-Gly-aminoethanethioate + 2-iminoacetate + 1-deoxy-D-xylulose 5-phosphate = [ThiS sulfur-carrier protein]-C-terminal Gly-Gly + 2-[(2R,5Z)-2-carboxy-4-methylthiazol-5(2H)-ylidene]ethyl phosphate + 2 H2O + H(+). It participates in cofactor biosynthesis; thiamine diphosphate biosynthesis. Its function is as follows. Catalyzes the rearrangement of 1-deoxy-D-xylulose 5-phosphate (DXP) to produce the thiazole phosphate moiety of thiamine. Sulfur is provided by the thiocarboxylate moiety of the carrier protein ThiS. In vitro, sulfur can be provided by H(2)S. In Acinetobacter baylyi (strain ATCC 33305 / BD413 / ADP1), this protein is Thiazole synthase.